Here is a 359-residue protein sequence, read N- to C-terminus: Fructose-bisphosphate aldolase (359 aa).

Position 50 (Ser-50) interacts with D-glyceraldehyde 3-phosphate. Residue Asp-83 is the Proton donor of the active site. 4 residues coordinate Zn(2+): His-84, Asp-105, Glu-142, and His-198. Gly-199 contacts dihydroxyacetone phosphate. His-232 contacts Zn(2+). Dihydroxyacetone phosphate is bound by residues 233–235 and 275–278; these read GSS and NIDT.

This sequence belongs to the class II fructose-bisphosphate aldolase family. In terms of assembly, homodimer. The cofactor is Zn(2+).

The enzyme catalyses beta-D-fructose 1,6-bisphosphate = D-glyceraldehyde 3-phosphate + dihydroxyacetone phosphate. It functions in the pathway carbohydrate biosynthesis; Calvin cycle. The protein operates within carbohydrate degradation; glycolysis; D-glyceraldehyde 3-phosphate and glycerone phosphate from D-glucose: step 4/4. Catalyzes the aldol condensation of dihydroxyacetone phosphate (DHAP or glycerone-phosphate) with glyceraldehyde 3-phosphate (G3P) to form fructose 1,6-bisphosphate (FBP) in gluconeogenesis and the reverse reaction in glycolysis. The sequence is that of Fructose-bisphosphate aldolase (cbbA) from Sinorhizobium medicae (strain WSM419) (Ensifer medicae).